The primary structure comprises 113 residues: Carboxysome shell protein CcmK1 (113 aa).

The BMC domain occupies 4 to 90 (AVGMIETLGF…PHENLEYVLP (87 aa)).

The protein belongs to the bacterial microcompartments protein family. CcmK subfamily. Homohexamer. Interacts preferentially with CcmK2 and CcmK4a rather than itself in vitro.

The protein resides in the carboxysome. Functionally, one of the shell proteins of the carboxysome, a polyhedral inclusion where RuBisCO (ribulose bisphosphate carboxylase, rbcL-rbcS) is sequestered. Assembles into hexamers which make sheets that form the facets of the polyhedral carboxysome. The hexamer central pore probably regulates metabolite flux. The sequence is that of Carboxysome shell protein CcmK1 from Thermosynechococcus vestitus (strain NIES-2133 / IAM M-273 / BP-1).